The chain runs to 382 residues: E3 ubiquitin-protein ligase RNF133 (382 aa).

One can recognise a PA domain in the interval 65-167 (SSILKRVAGV…IKGMEILHLI (103 aa)). Residues 190 to 210 (YFVSFMIVTTATLAYFTFYHI) form a helical membrane-spanning segment. Residues 256–297 (CVICFEAYKPNEIVRILTCKHFFHKNCIDPWILAHGTCPMCK) form an RING-type; atypical zinc finger. A disordered region spans residues 328–382 (TLSPVEEETNYELPPARTSSKVTHVQEHPTSSANAGSQPPEAEETSHPSHGQQVL). A compositionally biased stretch (polar residues) spans 344–364 (RTSSKVTHVQEHPTSSANAGS).

In terms of assembly, interacts with E3 ligase UBE2J1. Auto-ubiquitinated. Expression is testis-specific.

Its subcellular location is the endoplasmic reticulum membrane. It carries out the reaction S-ubiquitinyl-[E2 ubiquitin-conjugating enzyme]-L-cysteine + [acceptor protein]-L-lysine = [E2 ubiquitin-conjugating enzyme]-L-cysteine + N(6)-ubiquitinyl-[acceptor protein]-L-lysine.. It functions in the pathway protein modification; protein ubiquitination. Its function is as follows. Has E3 ubiquitin-protein ligase activity. Plays a role in male fecundity through the interaction with the E2 ubituitin-protein ligase UBE2J1. This is E3 ubiquitin-protein ligase RNF133 (Rnf133) from Mus musculus (Mouse).